Here is a 101-residue protein sequence, read N- to C-terminus: RNA-binding protein Hfq (101 aa).

The region spanning 9 to 68 (DPFLNALRRERVPVSIYLVNGIKLQGQVESFDQFVILLKNTVSQMVYKHAISTVVPSPPV) is the Sm domain. The tract at residues 62–101 (VVPSPPVSHHSNTPSGSTNNYHGSNPSAPQQPQQDSDDAE) is disordered. Positions 70–86 (HHSNTPSGSTNNYHGSN) are enriched in polar residues.

The protein belongs to the Hfq family. In terms of assembly, homohexamer.

Functionally, RNA chaperone that binds small regulatory RNA (sRNAs) and mRNAs to facilitate mRNA translational regulation in response to envelope stress, environmental stress and changes in metabolite concentrations. Also binds with high specificity to tRNAs. The chain is RNA-binding protein Hfq from Yersinia pestis (strain Pestoides F).